The chain runs to 1241 residues: eIF-2-alpha kinase GCN2 (1241 aa).

Over residues 1–15 the composition is skewed to basic residues; sequence MGRSSSKKKKKRGGS. Residues 1-33 are disordered; that stretch reads MGRSSSKKKKKRGGSGRRGQLKDHGSNADEDNE. The RWD domain occupies 37 to 148; that stretch reads EEITALSAIF…EAAQEFLSEI (112 aa). The disordered stretch occupies residues 253–321; sequence PIAKLNTVQE…SLGSWSSDSL (69 aa). Composition is skewed to low complexity over residues 267-276 and 307-321; these read DTSISSFDSS and NSES…SDSL. The region spanning 425–731 is the Protein kinase domain; sequence FEELKPLGQG…ATELLKHAFP (307 aa). ATP contacts are provided by residues 431 to 439 and Lys-454; that span reads LGQGGFGHV. The active-site Proton acceptor is the Asp-586. Positions 819–1219 are histidyl-tRNA synthetase-like; it reads IPMRLLSDCP…ELKKEKVVGR (401 aa).

This sequence belongs to the protein kinase superfamily. Ser/Thr protein kinase family. GCN2 subfamily. Homodimer; homodimerization is important for kinase activation by uncharged tRNAs. Expressed in roots, leaves, stems, buds, flowers, siliques and seedlings.

It localises to the cytoplasm. It carries out the reaction L-seryl-[protein] + ATP = O-phospho-L-seryl-[protein] + ADP + H(+). The enzyme catalyses L-threonyl-[protein] + ATP = O-phospho-L-threonyl-[protein] + ADP + H(+). The kinase activity is stimulated upon binding to uncharged tRNAs. Functionally, metabolic-stress sensing protein kinase that phosphorylates the alpha subunit of eukaryotic translation initiation factor 2 eIF-2-alpha in response to low amino acid availability. Plays a role as an activator of the general amino acid control pathway required for adapatation to amino acid starvation. Converts phosphorylated eIF-2-alpha either to a competitive inhibitor of translation initiation, leading to a global protein synthesis repression, and thus to a reduced overall utilization of amino acids, or to a translational initiation activation of specific mRNAs, and hence allowing reprogramming of amino acid biosynthetic gene expression to alleviate nutrient depletion. Binds uncharged tRNAs. The chain is eIF-2-alpha kinase GCN2 from Arabidopsis thaliana (Mouse-ear cress).